The chain runs to 128 residues: NADH-ubiquinone oxidoreductase chain 3 (128 aa).

Transmembrane regions (helical) follow at residues 3-23 (TIYT…NYLI), 52-72 (VAFI…SSIL), and 84-104 (YGLS…VYEI).

It belongs to the complex I subunit 3 family.

Its subcellular location is the mitochondrion membrane. It catalyses the reaction a ubiquinone + NADH + 5 H(+)(in) = a ubiquinol + NAD(+) + 4 H(+)(out). Its function is as follows. Core subunit of the mitochondrial membrane respiratory chain NADH dehydrogenase (Complex I) that is believed to belong to the minimal assembly required for catalysis. Complex I functions in the transfer of electrons from NADH to the respiratory chain. The immediate electron acceptor for the enzyme is believed to be ubiquinone. In Debaryomyces hansenii (strain ATCC 36239 / CBS 767 / BCRC 21394 / JCM 1990 / NBRC 0083 / IGC 2968) (Yeast), this protein is NADH-ubiquinone oxidoreductase chain 3 (ND3).